The following is a 786-amino-acid chain: Aculeacin-A acylase (786 aa).

An N-terminal signal peptide occupies residues 1–22 (MTSSYMRLKAAAIAFGVIVATA). The propeptide occupies 23–34 (AVPSPASGREHD). The tract at residues 35–130 (GGYAALIRRA…PRDGVRAPCD (96 aa)) is substrate-binding. The propeptide at 215 to 229 (AAIAAALDGTSAGIG) is spacer peptide. The segment at 220 to 239 (ALDGTSAGIGSNAYGLGAQA) is possible recognition-sequence of an AAC processing enzyme. S230 acts as the Nucleophile in catalysis. The interval 658-689 (ACNGSPASPSTRSVGDIHTDSRGERRIPIHGG) is disordered. The span at 672–684 (GDIHTDSRGERRI) shows a compositional bias: basic and acidic residues.

The protein belongs to the peptidase S45 family. As to quaternary structure, heterodimer of a small subunit and a large subunit processed from the same precursor.

The protein resides in the secreted. In terms of biological role, catalyzes the hydrolysis of the palmitoyl moiety of the antifungal antibiotic, aculeacin-A, giving a hexapeptide moiety and a long chain fatty acid. This is Aculeacin-A acylase (aac) from Actinoplanes utahensis.